A 1229-amino-acid chain; its full sequence is MKVRKMHYPLFSFTEYLSCYIILYFFVFLPNYSYAININNYHNKNNLWNINNKWNNQQSNHFSNNRIGHFLWGSKIRKNPLASISTSITTKKLENQKKKTNKNESYSNVNDKYEHNNNTAHFVQINYKNDQSNDTLSTYKNNNEMTVEGKPNNLASGEGKKEIHNTTQKILEKVDYFKEREKITNSYNNNNNNNKVIVTHDNKNHTNYINKVENKQSDDKIKNLNNKYIKKFKSHILQNDILGTISTMFWSGKKNNNGNVKKGIKNVPMDEKSYSPNDHDNNSNNSNNNNNNDNNNSNNNNNNNNGGKNNSYYNEKTQKGVNDKETNFLLKALDSGKFPTYCLVENIDENLDNFDIYMSKEKMDELNINDGATVLLKGKKKREMLGIARLDRSLKKHYVVISFAMKKNLRLMHNDIIKIHPFMNAKRIRNVVLSPFSDTIPNLSREELEKAVIHPYLKNSYKPLRVNSNIYIYYKNNKIEFKVLKIISEESENEEFGCIGEHSQLTLAEEYLKREDYEENNDDITYEDLGGMKKQLNKIRELIELPLKYPEIFMSIGISAPKGVLMHGIPGTGKTSIAKAIANESNAYCYIINGPEIMSKHIGESEQKLRKIFKKASEKTPCIIFIDEIDSIANKRSKSNNELEKRVVSQLLTLMDGLKKNNNVLVLAATNRPNSIDPALRRFGRFDREIEIPVPDEQGRYEILLTKTKKMKLDPDVNLRKIAKECHGYVGADLAQLCFEAAIQCIKEHIHFLDLDEEDFIEFMKISVDEDKKNMGNEPYGSSHTNNSNYINHLTESSNKLSYTNMFPLNRKNTLLQNDKNEMNKDSSYDKKTDALDNYKNDSTIDMEKKKNKKKSNFFFSNDDEETKNKNKTNVNQKKKKNPNDKLDKNERRIPAYILNKLTIKAKHFQHALNICNPSSLRERQVQIPTVTWNDIGGMNEVKEQLKETILYPLEYKHLYNKFNSNYNKGILLYGPPGCGKTLLAKAIANECKANFISVKGPELLTMWFGESEANVRDLFDKARAASPCIIFFDEIDSLAKERNSNTNNDASDRVINQILTEIDGINEKKTIFIIAATNRPDILDKALTRPGRLDKLIYISLPDLKSRYSIFKAILKNTPLNEDVDIHDMAKRTEGFSGADITNLCQSAVNEAIKETIHLLNIRKKEQEEQRKKNKNSFKIDDTDTYDPVPTLSKKHFDLAFKNARISIQPEDVLKYEKFKEKLSLQDF.

Over residues 252–267 (GKKNNNGNVKKGIKNV) the composition is skewed to low complexity. Residues 252-315 (GKKNNNGNVK…GGKNNSYYNE (64 aa)) are disordered. The span at 268 to 281 (PMDEKSYSPNDHDN) shows a compositional bias: basic and acidic residues. Positions 282–314 (NSNNSNNNNNNDNNNSNNNNNNNNGGKNNSYYN) are enriched in low complexity. 568–575 (GIPGTGKT) contacts ATP. Disordered stretches follow at residues 814-837 (TLLQ…DALD) and 860-892 (FSND…KNER). Composition is skewed to basic and acidic residues over residues 819–837 (DKNE…DALD) and 882–892 (NPNDKLDKNER). 975-982 (GPPGCGKT) contributes to the ATP binding site.

It belongs to the AAA ATPase family.

This Plasmodium falciparum (isolate 3D7) protein is Putative cell division cycle ATPase.